A 743-amino-acid chain; its full sequence is UvrABC system protein C (743 aa).

In terms of domain architecture, GIY-YIG spans 16-95 (VDPGVYKFRD…IKEFDPRFNV (80 aa)). The UVR domain maps to 208–243 (DKLVRQLEARMQQASEELDFETAARLRDDVGALRRA). 2 disordered regions span residues 497 to 543 (AEAA…QTGR) and 694 to 743 (PSAD…TGVE). Positions 506–520 (QASDTDGDQVSDTDG) are enriched in acidic residues. The span at 734-743 (QSASQRTGVE) shows a compositional bias: polar residues.

It belongs to the UvrC family. Interacts with UvrB in an incision complex.

It localises to the cytoplasm. Functionally, the UvrABC repair system catalyzes the recognition and processing of DNA lesions. UvrC both incises the 5' and 3' sides of the lesion. The N-terminal half is responsible for the 3' incision and the C-terminal half is responsible for the 5' incision. This is UvrABC system protein C from Rhodococcus opacus (strain B4).